Here is a 102-residue protein sequence, read N- to C-terminus: Large ribosomal subunit protein bL21 (102 aa).

This sequence belongs to the bacterial ribosomal protein bL21 family. As to quaternary structure, part of the 50S ribosomal subunit. Contacts protein L20.

In terms of biological role, this protein binds to 23S rRNA in the presence of protein L20. This chain is Large ribosomal subunit protein bL21, found in Shouchella clausii (strain KSM-K16) (Alkalihalobacillus clausii).